We begin with the raw amino-acid sequence, 686 residues long: ATP-dependent DNA helicase RecG (686 aa).

The tract at residues 50–149 (TVIDLNQAED…GTQTQENADV (100 aa)) is wedge domain. One can recognise a Helicase ATP-binding domain in the interval 279 to 439 (DLKAPIRMHR…VFGEMDVSSI (161 aa)). Position 292 to 299 (292 to 299 (GDVGSGKT)) interacts with ATP. A DEAH box motif is present at residues 392–395 (DEQH). Residues 462–618 (VLMQMTSELK…GFELSERDLE (157 aa)) enclose the Helicase C-terminal domain.

The protein belongs to the helicase family. RecG subfamily. As to quaternary structure, monomer.

It catalyses the reaction Couples ATP hydrolysis with the unwinding of duplex DNA by translocating in the 3'-5' direction.. It carries out the reaction ATP + H2O = ADP + phosphate + H(+). Functionally, plays a critical role in recombination and DNA repair. Helps process Holliday junction intermediates to mature products by catalyzing branch migration. Has replication fork regression activity, unwinds stalled or blocked replication forks to make a HJ that can be resolved. Has a DNA unwinding activity characteristic of a DNA helicase with 3'-5' polarity. This is ATP-dependent DNA helicase RecG from Staphylococcus aureus (strain NCTC 8325 / PS 47).